The following is a 692-amino-acid chain: Elongation factor G (692 aa).

A tr-type G domain is found at 8-282; sequence AKTRNIGIMA…AVIAYLPSPL (275 aa). Residues 17–24, 81–85, and 135–138 contribute to the GTP site; these read AHVDAGKT, DTPGH, and NKMD.

Belongs to the TRAFAC class translation factor GTPase superfamily. Classic translation factor GTPase family. EF-G/EF-2 subfamily.

It is found in the cytoplasm. In terms of biological role, catalyzes the GTP-dependent ribosomal translocation step during translation elongation. During this step, the ribosome changes from the pre-translocational (PRE) to the post-translocational (POST) state as the newly formed A-site-bound peptidyl-tRNA and P-site-bound deacylated tRNA move to the P and E sites, respectively. Catalyzes the coordinated movement of the two tRNA molecules, the mRNA and conformational changes in the ribosome. This chain is Elongation factor G, found in Streptococcus pyogenes serotype M49 (strain NZ131).